The sequence spans 2450 residues: Tetratricopeptide repeat protein 28 (2450 aa).

N-acetylmethionine is present on Met1. Positions 1–36 (MEQPPPLAPEPASARSRRRREPESPPAPIPLFGART) are disordered. Ser24 carries the post-translational modification Phosphoserine. TPR repeat units follow at residues 52-85 (FVEKVRQSNQACHDGDFHTAIVLYNEALAVDPQN), 87-119 (ILYSNRSAAYMKTQQYHKALDDAIKARLLNPKW), 120-153 (PKAYFRQGVALQYLGRHADALAAFASGLAQDPKS), 190-223 (FVVVSVVGQELLTAGHHGASVVVLEAALKIGTCS), 228-261 (GSVFSALSSAHWSLGNTEKSTGYMQQDLDVAKTL), 268-301 (CRAHGNLGSAFFSKGNYREALTNHRHQLVLAMKL), 308-341 (SSALSSLGHVYTAIGDYPNALASHKQCVLLAKQS), 348-381 (ARELGNMGAVYIAMGDFENAVQCHEQHLRIAKDL), 388-421 (ARAYSNLGSAYHYRRNFDKAMSYHNCVLELAQEL), 428-461 (MRAYAGLGHAARCMQDLERAKQYHEQQLGIAEDL), 468-501 (GRASSNLGIIHQMKGDYDTALKLHKTHLCIAQEL), 508-541 (GRAYGNMGNAYNALGMYDQAVKYHRQELQISMEV), 548-581 (ASTHGNLAVAYQALGAHDRALQHYQNHLNIAREL), 588-621 (ARALSNLGNFHCSRGEYVQAAPYYEQYLRLAPDL), 628-661 (GKVCHNLGYAHYCLGNYQEAVKYYEQDLALAKDL), 668-701 (AKAYCNLGLAFKALLNFAKAEECQKYLLSLAQSL), 708-741 (FRALGNLGDIFICKKDINGAIKFYEQQLGLSHHV), 748-781 (ASAYAALGTAYRMVQKYDKALGYHTQELEVYQEL), 788-821 (CRAHGHLAAVYMALGKYTMAFKCYQEQLELGRKL), 828-861 (AQVYGNMGITKMNMNVMEDAIGYFEQQLAMLQQL), 871-904 (GRAYGNLGDCYEALGDYEEAIKYYEQYLSVAQSL), 911-944 (AKAYRGLGNGHRATGSLQQALVCFEKRLVVAHEL), 951-984 (AQAYGELGSLHSQLGNYEQAISCLERQLNIARDM), 991-1024 (SDAACGLGGVYQQMGEYDTALQYHQLDLQIAEET), 1031-1064 (GRAYGNLGLTYESLGTFERAVVYQEQHLSIAAQM), 1071-1104 (TVSYSSLGRTHHALQNYSQAVMYLQEGLRLAEQL), 1111-1144 (AKIRHGLGLSLWASGNLEEAQHQLYRASALFETI), and 1163-1196 (TSSYQALQRVLVSLGHHDEALAVAERGRTRAFAD). The disordered stretch occupies residues 1362-1381 (SGTVSPSKDGTSSLPRRQNS). Ser1584 and Ser2098 each carry phosphoserine. The disordered stretch occupies residues 2001–2364 (KPEGGLEGGG…GTLTSKRDVL (364 aa)). A compositionally biased stretch (polar residues) spans 2090 to 2116 (SVSSKGSVSTPNSPVKMTLIPSPNSPF). The segment covering 2124–2140 (SSDTGESDQSSTETDST) has biased composition (low complexity). Basic and acidic residues predominate over residues 2143-2153 (SQEESTPKLDP). A compositionally biased stretch (polar residues) spans 2191–2206 (APSSTTVFRASETSAF). A Phosphoserine modification is found at Ser2216. Residues 2229–2245 (ARSSSLPKVSSPATSEV) are compositionally biased toward polar residues. Low complexity-rich tracts occupy residues 2252-2262 (SPPGSSHPSPG) and 2296-2320 (SPACSAPSPALSYSSAGSARSSPAD). Phosphoserine occurs at positions 2365 and 2370.

As to quaternary structure, interacts with AURKB. As to expression, expressed in embryos at all stages examined. In adult tissues, detected in heart and at low levels in kidney and testis.

It localises to the cytoplasm. The protein localises to the cytoskeleton. Its subcellular location is the microtubule organizing center. It is found in the centrosome. The protein resides in the spindle. It localises to the spindle pole. The protein localises to the midbody. Its function is as follows. During mitosis, may be involved in the condensation of spindle midzone microtubules, leading to the formation of midbody. Functionally, essential for the formation and integrity of the midbody. Max play a critical role in the progress of mitosis and cytokinesis during cell cycle. This is Tetratricopeptide repeat protein 28 (Ttc28) from Mus musculus (Mouse).